The sequence spans 64 residues: Translational regulator CsrA 1 (64 aa).

The protein belongs to the CsrA/RsmA family. In terms of assembly, homodimer; the beta-strands of each monomer intercalate to form a hydrophobic core, while the alpha-helices form wings that extend away from the core.

It localises to the cytoplasm. A key translational regulator that binds mRNA to regulate translation initiation and/or mRNA stability. Mediates global changes in gene expression, shifting from rapid growth to stress survival by linking envelope stress, the stringent response and the catabolite repression systems. Usually binds in the 5'-UTR; binding at or near the Shine-Dalgarno sequence prevents ribosome-binding, repressing translation, binding elsewhere in the 5'-UTR can activate translation and/or stabilize the mRNA. Its function is antagonized by small RNA(s). In Pseudomonas syringae pv. tomato (strain ATCC BAA-871 / DC3000), this protein is Translational regulator CsrA 1.